Reading from the N-terminus, the 599-residue chain is Protein ECM25 (599 aa).

Residues Asn181–Ala359 form the Rho-GAP domain. Disordered stretches follow at residues Ile362 to Ile447, Ala468 to Asp495, and Glu543 to Gln563. Composition is skewed to low complexity over residues Ser363–Ser373, Thr396–Thr413, and Ala468–Ser483. The span at Glu543–Ser562 shows a compositional bias: basic and acidic residues.

Its subcellular location is the cytoplasm. Functionally, may be involved in cell wall organization and biogenesis. In Saccharomyces cerevisiae (strain ATCC 204508 / S288c) (Baker's yeast), this protein is Protein ECM25 (ECM25).